The primary structure comprises 378 residues: GTPase Obg (378 aa).

An Obg domain is found at 1-159 (MKFVDEATIE…RRLRLELKVL (159 aa)). Positions 160-336 (ADVGLLGLPN…LIWALQDYLD (177 aa)) constitute an OBG-type G domain. GTP contacts are provided by residues 166–173 (GLPNAGKS), 191–195 (FTTLH), 213–216 (DIPG), 288–291 (NKLD), and 317–319 (SGL). 2 residues coordinate Mg(2+): S173 and T193. The tract at residues 345 to 378 (AQDQADGTYVAEDPRFDATRSDAAPPGAPRGGDE) is disordered.

Belongs to the TRAFAC class OBG-HflX-like GTPase superfamily. OBG GTPase family. As to quaternary structure, monomer. Mg(2+) is required as a cofactor.

It localises to the cytoplasm. Functionally, an essential GTPase which binds GTP, GDP and possibly (p)ppGpp with moderate affinity, with high nucleotide exchange rates and a fairly low GTP hydrolysis rate. Plays a role in control of the cell cycle, stress response, ribosome biogenesis and in those bacteria that undergo differentiation, in morphogenesis control. This chain is GTPase Obg, found in Bordetella petrii (strain ATCC BAA-461 / DSM 12804 / CCUG 43448).